A 594-amino-acid polypeptide reads, in one-letter code: Segmentation polarity homeobox protein engrailed (594 aa).

Disordered regions lie at residues 1-64 (MALE…TRDE), 76-127 (IKQE…PASI), 141-164 (KATAEQQQQPHPQPPAIREPISPG), 198-217 (HYYQPSPSHPQPIVPQPQRA), 231-299 (ISKS…PTGS), 387-458 (AGTG…GSEN), and 474-501 (DRPSSGPRYRRTKQPKEKGDSEEKRPRT). Residues 22-60 (SQSPTSTTTVTMATASPVPACTTTTTTTSTSGASAASSP) are compositionally biased toward low complexity. Positions 92–112 (PHHHQHPHHHQLPHHPHHQHH) are enriched in basic residues. A compositionally biased stretch (pro residues) spans 151–164 (HPQPPAIREPISPG). A compositionally biased stretch (polar residues) spans 237–247 (LCSSNGSSSAT). Low complexity-rich tracts occupy residues 278 to 299 (ASPSSASSAMTTPVTTSSPTGS) and 387 to 402 (AGTGSLNGSGSAANGA). Polar residues-rich tracts occupy residues 426–436 (SSETNGSSSQD) and 448–458 (ETSSTKDGSEN). Over residues 487–499 (QPKEKGDSEEKRP) the composition is skewed to basic and acidic residues. Residues 496 to 555 (EKRPRTAFSNAQLQRLKNEFNENRYLTEKRRQTLSAELGLNEAQIKIWFQNKRAKIKKSS) constitute a DNA-binding region (homeobox).

Belongs to the engrailed homeobox family.

It localises to the nucleus. Functionally, this protein specifies the body segmentation pattern. It is required for the development of the central nervous system. Transcriptional regulator that repress activated promoters. The sequence is that of Segmentation polarity homeobox protein engrailed (en) from Anopheles gambiae (African malaria mosquito).